A 558-amino-acid polypeptide reads, in one-letter code: Phosphatidylserine lipase ABHD16A (558 aa).

The next 2 helical transmembrane spans lie at 60-80 (ILAL…FAFF) and 93-113 (VVPF…VACL). Residues 114 to 558 (RGIGRWTNPQ…AQNFQMPWHL (445 aa)) lie on the Cytoplasmic side of the membrane. In terms of domain architecture, AB hydrolase-1 spans 281-407 (LVICCEGNAG…LVTRTVRQHL (127 aa)). Active-site charge relay system residues include S355, D430, and H507.

Belongs to the AB hydrolase superfamily. ABHD16 family.

It localises to the membrane. It catalyses the reaction 1-heptadecanoyl-2-(5Z,8Z,11Z,14Z-eicosatetraenoyl)-sn-glycero-3-phosphoserine + H2O = 1-heptadecanoyl-sn-glycero-3-phosphoserine + (5Z,8Z,11Z,14Z)-eicosatetraenoate + H(+). It carries out the reaction 1-hexadecanoyl-2-(9Z-octadecenoyl)-sn-glycero-3-phospho-L-serine + H2O = 1-hexadecanoyl-sn-glycero-3-phospho-L-serine + (9Z)-octadecenoate + H(+). The catalysed reaction is 1-octadecanoyl-2-(9Z,12Z-octadecadienoyl)-sn-glycero-3-phosphoserine + H2O = 1-octadecanoyl-sn-glycero-3-phosphoserine + (9Z,12Z)-octadecadienoate + H(+). The enzyme catalyses 1-heptadecanoyl-2-(5Z,8Z,11Z,14Z-eicosatetraenoyl)-sn-glycero-3-phosphocholine + H2O = 1-heptadecanoyl-sn-glycero-3-phosphocholine + (5Z,8Z,11Z,14Z)-eicosatetraenoate + H(+). It catalyses the reaction 1-hexadecanoyl-2-(9Z-octadecenoyl)-sn-glycero-3-phosphoglycerol + H2O = 1-hexadecanoyl-sn-glycero-3-phosphoglycerol + (9Z)-octadecenoate + H(+). It carries out the reaction 1-hexadecanoyl-2-(9Z-octadecenoyl)-sn-glycero-3-phospho-(1D-myo-inositol) + H2O = 1-hexadecanoyl-sn-glycero-3-phospho-(1D-myo-inositol) + (9Z)-octadecenoate + H(+). The catalysed reaction is 1-heptadecanoyl-2-(5Z,8Z,11Z,14Z-eicosatetraenoyl)-sn-glycero-3-phosphoethanolamine + H2O = 1-heptadecanoyl-sn-glycero-3-phosphoethanolamine + (5Z,8Z,11Z,14Z)-eicosatetraenoate + H(+). The enzyme catalyses 1-hexadecanoyl-2-(9Z-octadecenoyl)-sn-glycero-3-phospho-(1'-sn-glycerol) + H2O = 1-hexadecanoyl-sn-glycero-3-phospho-(1'-sn-glycerol) + (9Z)-octadecenoate + H(+). It catalyses the reaction Hydrolyzes glycerol monoesters of long-chain fatty acids.. It carries out the reaction 1-tetradecanoylglycerol + H2O = tetradecanoate + glycerol + H(+). The catalysed reaction is 2-hexadecanoylglycerol + H2O = glycerol + hexadecanoate + H(+). The enzyme catalyses 1-(9Z-octadecenoyl)-glycerol + H2O = glycerol + (9Z)-octadecenoate + H(+). It catalyses the reaction 2-(9Z-octadecenoyl)-glycerol + H2O = glycerol + (9Z)-octadecenoate + H(+). It carries out the reaction 2-(9Z,12Z-octadecadienoyl)-glycerol + H2O = (9Z,12Z)-octadecadienoate + glycerol + H(+). The catalysed reaction is 1-(5Z,8Z,11Z,14Z-eicosatetraenoyl)-glycerol + H2O = glycerol + (5Z,8Z,11Z,14Z)-eicosatetraenoate + H(+). The enzyme catalyses 2-(5Z,8Z,11Z,14Z-eicosatetraenoyl)-glycerol + H2O = glycerol + (5Z,8Z,11Z,14Z)-eicosatetraenoate + H(+). It catalyses the reaction prostaglandin D2-1-glycerol ester + H2O = prostaglandin D2 + glycerol + H(+). It carries out the reaction 2-glyceryl-15-deoxy-Delta(12,14)-prostaglandin J2 + H2O = 15-deoxy-Delta(12,14)-prostaglandin J2 + glycerol + H(+). The catalysed reaction is 1-(9Z,12Z-octadecadienoyl)-glycerol + H2O = (9Z,12Z)-octadecadienoate + glycerol + H(+). Its activity is regulated as follows. Inhibited by beta-lactone-based lipid inhibitors, such as beta-lactone palmostatin-B. Phosphatidylserine (PS) lipase that mediates the hydrolysis of phosphatidylserine to generate lysophosphatidylserine (LPS). LPS constitutes a class of signaling lipids that regulates immunological and neurological processes. Has no activity towards diacylglycerol, triacylglycerol or lysophosphatidylserine lipase. Also has monoacylglycerol lipase activity, with preference for 1-(9Z,12Z-octadecadienoyl)-glycerol (1-LG) and 2-glyceryl-15-deoxy-Delta(12,14)-prostaglandin J2 (15d-PGJ(2)-G). This Homo sapiens (Human) protein is Phosphatidylserine lipase ABHD16A.